The following is a 437-amino-acid chain: MRRYFGTDGVRGEAGKPPLTPEFVLKLGQAAGAYFRTQEKRPVVLLAKDTRESSDLLEAALAAGLMSQGVRVEHLGVLPTPGVAHLTKALKATAGAVISASHNPYQDNGIKFFGPTGEKLPDEAEEEIERLLLEDHPTRGIGTVGDFREAERMYLDFLLAHAPDLTGLKVGLDLAHGATYRIGPKLFQKAGAEVMAFFNTPDGRNINRGCGSTHPEALSRFVVELGLDLGLAFDGDGDRVQFIDRKGRLFHGDHVLYLAALAFGEKGVVGTVMSNMALEVALKERGLAFHRAAVGDRYVLEKLKETGLALGGEPSGHVIFLRHHTTGDGLLTALLTLKALKALGGDLADWYEALPLYPQVLLNVRVSDKAKVMADPRLGEAVREAEARLGGRGRVNVRPSGTEPVIRVMVEAEEWAEEVARELAERVRALSQEAQAV.

Ser101 serves as the catalytic Phosphoserine intermediate. 4 residues coordinate Mg(2+): Ser101, Asp234, Asp236, and Asp238. Ser101 is subject to Phosphoserine.

The protein belongs to the phosphohexose mutase family. The cofactor is Mg(2+). Activated by phosphorylation.

The enzyme catalyses alpha-D-glucosamine 1-phosphate = D-glucosamine 6-phosphate. In terms of biological role, catalyzes the conversion of glucosamine-6-phosphate to glucosamine-1-phosphate. This Thermus thermophilus (strain ATCC BAA-163 / DSM 7039 / HB27) protein is Phosphoglucosamine mutase.